Reading from the N-terminus, the 77-residue chain is Small nuclear ribonucleoprotein G (77 aa).

One can recognise a Sm domain in the interval 4–76; the sequence is AGAPDLKKYL…VIMIETLDKM (73 aa).

This sequence belongs to the snRNP Sm proteins family. In terms of assembly, belongs to the 40S cdc5-associated complex (or cwf complex), a spliceosome sub-complex reminiscent of a late-stage spliceosome composed of the U2, U5 and U6 snRNAs and at least brr2, cdc5, cwf2/prp3, cwf3/syf1, cwf4/syf3, cwf5/ecm2, spp42/cwf6, cwf7/spf27, cwf8, cwf9, cwf10, cwf11, cwf12, prp45/cwf13, cwf14, cwf15, cwf16, cwf17, cwf18, cwf19, cwf20, cwf21, cwf22, cwf23, cwf24, cwf25, cwf26, cyp7/cwf27, cwf28, cwf29/ist3, lea1, msl1, prp5/cwf1, prp10, prp12/sap130, prp17, prp22, sap61, sap62, sap114, sap145, slu7, smb1, smd1, smd3, smf1, smg1 and syf2.

It localises to the nucleus. Its subcellular location is the cytoplasm. Its function is as follows. Plays a role in pre-mRNA splicing as a core component of the spliceosomal U1, U2, U4 and U5 small nuclear ribonucleoproteins (snRNPs), the building blocks of the spliceosome. This chain is Small nuclear ribonucleoprotein G (smg1), found in Schizosaccharomyces pombe (strain 972 / ATCC 24843) (Fission yeast).